The following is a 247-amino-acid chain: uncharacterized protein (247 aa).

NADP(+) contacts are provided by Leu11, Asn85, and Lys119. Ser136 functions as the Proton donor in the catalytic mechanism. 4 residues coordinate NADP(+): Tyr150, Lys154, Val181, and Thr183. Residue Tyr150 is the Proton acceptor of the active site. Lys154 acts as the Lowers pKa of active site Tyr in catalysis.

Belongs to the short-chain dehydrogenases/reductases (SDR) family.

This is an uncharacterized protein from Schizosaccharomyces pombe (strain 972 / ATCC 24843) (Fission yeast).